Reading from the N-terminus, the 593-residue chain is Capsid protein 1 (593 aa).

The protein belongs to the NCLDV major capsid protein family.

The protein localises to the virion. The polypeptide is Capsid protein 1 (Acanthamoeba polyphaga mimivirus (APMV)).